The following is a 436-amino-acid chain: Histone acetyltransferase type B subunit 2 (436 aa).

Residues 1-19 are compositionally biased toward acidic residues; it reads MEPYDDGFIEEQEEQEEER. The interval 1–22 is disordered; it reads MEPYDDGFIEEQEEQEEERTEE. WD repeat units follow at residues 136-176, 187-227, 237-277, 284-324, and 328-368; these read DHKG…SLPT, GHTK…KGNK, HHSS…TTRA, QHRD…TKLH, and CHTD…EEQT. The interaction with the histone H4 N-terminus stretch occupies residues 370–374; the sequence is DDAQD. The stretch at 385-425 is one WD 6 repeat; the sequence is GHTNRISDFSWNLNDPWVLCSAAEDNLLQVWKVADAIVGKD.

Belongs to the WD repeat RBAP46/RBAP48/MSI1 family. As to quaternary structure, component of the HAT-B complex composed of at least hat1 and hat2. The HAT-B complex binds to histone H4 tail.

The protein resides in the cytoplasm. Its subcellular location is the nucleus. Its function is as follows. Regulatory subunit of the histone acetylase B (HAT-B) complex. The complex acetylates 'Lys-12' of histone H4 which is required for telomeric silencing. The sequence is that of Histone acetyltransferase type B subunit 2 (hat2) from Aspergillus oryzae (strain ATCC 42149 / RIB 40) (Yellow koji mold).